A 128-amino-acid chain; its full sequence is Protein ripply2 (128 aa).

The segment at 1-64 (MDTTESAESA…ALPSGPGMAE (64 aa)) is disordered. The segment covering 17-28 (PSRSRCPPSAQP) has biased composition (low complexity). Residues 34–37 (WRPW) carry the WRPW motif motif. Residues 74-109 (HPVRLFWPKSKCYDYLYQEAETLLKNFPIQATISFY) form a ripply homology domain region.

The protein belongs to the ripply family. As to expression, expressed in the embryonic anterior presomitic mesoderm. First expressed in S-I at 8.5 dpc, where expression is maintained until 13.5 dpc, with an additional stripe of expression sometimes seen in the rostral part of S0 and S-I.

It localises to the nucleus. Its function is as follows. Plays a role in somitogenesis. Required for somite segregation and establishment of rostrocaudal polarity in somites. The sequence is that of Protein ripply2 from Mus musculus (Mouse).